The following is a 426-amino-acid chain: Tryptophan--tRNA ligase (426 aa).

The 'HIGH' region signature appears at proline 66–asparagine 74. The 'KMSKS' region motif lies at lysine 314–serine 318.

This sequence belongs to the class-I aminoacyl-tRNA synthetase family.

The protein resides in the cytoplasm. The enzyme catalyses tRNA(Trp) + L-tryptophan + ATP = L-tryptophyl-tRNA(Trp) + AMP + diphosphate + H(+). The protein is Tryptophan--tRNA ligase of Thermoplasma volcanium (strain ATCC 51530 / DSM 4299 / JCM 9571 / NBRC 15438 / GSS1).